The sequence spans 77 residues: RNA-binding protein Hfq (77 aa).

A Sm domain is found at Asp10–Ile70.

It belongs to the Hfq family. Homohexamer.

In terms of biological role, RNA chaperone that binds small regulatory RNA (sRNAs) and mRNAs to facilitate mRNA translational regulation in response to envelope stress, environmental stress and changes in metabolite concentrations. Also binds with high specificity to tRNAs. This chain is RNA-binding protein Hfq, found in Jannaschia sp. (strain CCS1).